The sequence spans 564 residues: Bifunctional sesquiterpene synthase 1 (564 aa).

Positions 317, 321, 461, and 469 each coordinate Mg(2+). Positions 317–321 match the DDXXD motif motif; that stretch reads DDTFD.

The protein belongs to the terpene synthase family. Requires Mg(2+) as cofactor.

It catalyses the reaction (2E,6E)-farnesyl diphosphate = alpha-copaene + diphosphate. The enzyme catalyses (2E,6E)-farnesyl diphosphate = delta-cadinene + diphosphate. Its pathway is secondary metabolite biosynthesis; terpenoid biosynthesis. In terms of biological role, sesquiterpene synthase converting farnesyl diphosphate to alpha copaene and delta-cadinene as the major products. The chain is Bifunctional sesquiterpene synthase 1 from Phyla dulcis (Aztec sweet herb).